The sequence spans 317 residues: Ribose-phosphate pyrophosphokinase (317 aa).

ATP is bound by residues 41-43 (DME) and 100-101 (RQ). Mg(2+) is bound by residues H134 and D174. K197 is an active-site residue. Residues R199, D223, and 227–231 (DSGGT) contribute to the D-ribose 5-phosphate site.

This sequence belongs to the ribose-phosphate pyrophosphokinase family. Class I subfamily. Homohexamer. The cofactor is Mg(2+).

It is found in the cytoplasm. The enzyme catalyses D-ribose 5-phosphate + ATP = 5-phospho-alpha-D-ribose 1-diphosphate + AMP + H(+). The protein operates within metabolic intermediate biosynthesis; 5-phospho-alpha-D-ribose 1-diphosphate biosynthesis; 5-phospho-alpha-D-ribose 1-diphosphate from D-ribose 5-phosphate (route I): step 1/1. Involved in the biosynthesis of the central metabolite phospho-alpha-D-ribosyl-1-pyrophosphate (PRPP) via the transfer of pyrophosphoryl group from ATP to 1-hydroxyl of ribose-5-phosphate (Rib-5-P). This is Ribose-phosphate pyrophosphokinase from Bradyrhizobium diazoefficiens (strain JCM 10833 / BCRC 13528 / IAM 13628 / NBRC 14792 / USDA 110).